We begin with the raw amino-acid sequence, 474 residues long: PTS system N-acetylmuramic acid-specific EIIBC component (474 aa).

In terms of domain architecture, PTS EIIB type-1 spans 1 to 89 (MAKEISSELL…SELLGDAPVQ (89 aa)). Residues 1 to 123 (MAKEISSELL…LAKFATIFTP (123 aa)) are Cytoplasmic-facing. Residue Cys-29 is the Phosphocysteine intermediate; for EIIB activity of the active site. The PTS EIIC type-1 domain occupies 115–474 (AKFATIFTPL…LFGCRNVNLD (360 aa)). A helical membrane pass occupies residues 124–144 (LIPGFIAAGLLLGIATLIATV). Topologically, residues 145–157 (MHVPADAQGTLPD) are periplasmic. The chain crosses the membrane as a helical span at residues 158–178 (ALNFMKVFSKGLFTFLVILVG). Topologically, residues 179–180 (YN) are cytoplasmic. The helical transmembrane segment at 181–201 (AAQAFGGTGVNGAIIAALFLL) threads the bilayer. At 202-217 (GYNPAATTGYYAGFHD) the chain is on the periplasmic side. A helical transmembrane segment spans residues 218–238 (FFGLPIDPRGNIIGVLIAAWA). The Cytoplasmic portion of the chain corresponds to 239 to 260 (CARIEGMVRRFMPDDLDMLLTS). A helical membrane pass occupies residues 261–281 (LITLLITATLAYLIIMPLGGW). The Periplasmic segment spans residues 282 to 301 (LFEGMSWLFMHLNSNPFGCA). The helical transmembrane segment at 302-322 (VLAGLFLIAVVFGVHQGFIPV) threads the bilayer. At 323–334 (YLALMDSQGFNS) the chain is on the cytoplasmic side. Residues 335–355 (LFPILSMAGAGQVGAALALYW) traverse the membrane as a helical segment. Residues 356–368 (RAQPHSALRSQVR) lie on the Periplasmic side of the membrane. The chain crosses the membrane as a helical span at residues 369 to 389 (GAIIPGLLGVGEPLIYGVTLP). Topologically, residues 390 to 393 (RMKP) are cytoplasmic. The chain crosses the membrane as a helical span at residues 394–414 (FVTACLGGAAGGLFIGLIAWW). Residues 415-440 (GLPMGLNSAFGPSGLVALPLMTSAQG) are Periplasmic-facing. A helical transmembrane segment spans residues 441 to 461 (ILPAMAVYAGGILVAWVCGFI). Residues 462-474 (FTTLFGCRNVNLD) lie on the Cytoplasmic side of the membrane.

It localises to the cell inner membrane. The enzyme catalyses N-acetyl-beta-D-muramate(out) + N(pros)-phospho-L-histidyl-[protein] = N-acetyl-beta-D-muramate 6-phosphate(in) + L-histidyl-[protein]. In terms of biological role, the phosphoenolpyruvate-dependent sugar phosphotransferase system (sugar PTS), a major carbohydrate active transport system, catalyzes the phosphorylation of incoming sugar substrates concomitantly with their translocation across the cell membrane. This system is involved in N-acetylmuramic acid (MurNAc) transport, yielding cytoplasmic MurNAc-6-P. Is also able to take up anhydro-N-acetylmuramic acid (anhMurNAc), but cannot phosphorylate the carbon 6, probably because of the 1,6-anhydro ring. The polypeptide is PTS system N-acetylmuramic acid-specific EIIBC component (murP) (Shigella flexneri).